Here is a 193-residue protein sequence, read N- to C-terminus: Peptidyl-tRNA hydrolase (193 aa).

Tyr-15 contacts tRNA. His-20 (proton acceptor) is an active-site residue. TRNA contacts are provided by Phe-65, Asn-67, and Asn-113.

The protein belongs to the PTH family. As to quaternary structure, monomer.

It localises to the cytoplasm. It carries out the reaction an N-acyl-L-alpha-aminoacyl-tRNA + H2O = an N-acyl-L-amino acid + a tRNA + H(+). Its function is as follows. Hydrolyzes ribosome-free peptidyl-tRNAs (with 1 or more amino acids incorporated), which drop off the ribosome during protein synthesis, or as a result of ribosome stalling. Catalyzes the release of premature peptidyl moieties from peptidyl-tRNA molecules trapped in stalled 50S ribosomal subunits, and thus maintains levels of free tRNAs and 50S ribosomes. This Ehrlichia ruminantium (strain Welgevonden) protein is Peptidyl-tRNA hydrolase.